The following is a 631-amino-acid chain: MDILKKIEKYREEEQRLKWEGTFADYLEIIKENPMVAQSAHSRVFNMIKDSGIEEIDGRKKYSFFDRELFGLEESLERLVEEYFHPAAKRLDVRKRILLLMGPVSGGKSTLVTMLKKGLEAYTLTDNGAVYAIKGCPMHEDPLHLIPHHLRDDFYREYGIRIEGSLSPLNVMRLEEEYGGRIEDVKVERIFFSEDKRTGIGTFSPSDPKSQDIADLTGSIDFSTIAEYGSESDPRAYRFDGELNKANRGMMEFQEMLKCDEKFLWHLLSLTQEGNFKAGRFALISADELIVAHTNETEYRSFISNKKNEALHSRIIVMPVPYNLKVSEEERIYEKMIAESDVADVHIAPHTLKVAAMFSILTRLKEPKRSDIDLVKKMRLYDGESVEGYNSVDVEDMKKEYNDEGMSGIDPRYVINRISSTIIRKNMESINSLDVLRSLKEGLDQHPSISSEDRERYLNFISAARKEYDDIAKKEVQKAFVYSYEESAKTLMDNYLDNVEAYCNKNKLRDPLTGEEMNPDEKLMRSIEEQIGISENAKKAFREEILIRISAYARKGKRFDYNSHERLREAIQKKLFADLKDVVKITTSTKTPDEQQLKKVNEVVARLIDEHGYNSTSANELLKYVGSLLNR.

Position 217 is a phosphothreonine (Thr217). Position 219 is a phosphoserine (Ser219).

Belongs to the PrkA family. In terms of processing, phosphorylated by PrkC on two sites, Thr-217 and Ser-219, with the threonine being the major site of modification.

It is found in the forespore. The protein resides in the spore coat. The enzyme catalyses Hydrolysis of proteins in presence of ATP.. With respect to regulation, hydrolase activity is regulated by phosphorylation by the Ser/Thr kinase PrkC, probably allowing fine control of sporulation. Phosphorylation by PrkC does not prevent ATP fixation but it inhibits specifically PrkA protease activity and down-regulates the sporulation processes. Hydrolase activity is inhibited by a protease inhibitor, phenylmethylsulfonyl fluoride (PMSF). Potential kinase activity requires the presence of MgCl(2) and is inhibited in the presence of MnCl(2). In terms of biological role, ATP-dependent protease that regulates sporulation. Is able to bind and hydrolyze ATP. This ATP-dependent protease activity is necessary for efficient sporulation of B.subtilis. In vitro, can hydrolyze alpha-casein, an exogenous substrate of Lon proteases, in an ATP-dependent manner. PrkA also modulates sporulation by negatively regulating the transcriptional regulator Hpr/ScoC to induce the expression of sigK. The control of sporulation mediated via the Hpr/ScoC regulator is probably indirect. PrkA was originally thought to be a protein kinase, as it has been shown to phosphorylate in vitro an unidentified 60 kDa protein from B.subtilis crude extracts at a serine residue. However, Zhang et al. did not observe autophosphorylation or kinase activity for this protein, suggesting that it may have lost its kinase activity during evolution or may be a pseudokinase. The chain is ATP-dependent protease PrkA from Bacillus subtilis (strain 168).